A 588-amino-acid polypeptide reads, in one-letter code: L-fucose isomerase (588 aa).

Residues E335 and D359 each act as proton acceptor in the active site. Mn(2+) is bound by residues E335, D359, and H525.

This sequence belongs to the L-fucose isomerase family. It depends on Mn(2+) as a cofactor.

The protein resides in the cytoplasm. It carries out the reaction L-fucose = L-fuculose. It participates in carbohydrate degradation; L-fucose degradation; L-lactaldehyde and glycerone phosphate from L-fucose: step 1/3. In terms of biological role, converts the aldose L-fucose into the corresponding ketose L-fuculose. The polypeptide is L-fucose isomerase (Streptococcus pneumoniae (strain ATCC 700669 / Spain 23F-1)).